Consider the following 79-residue polypeptide: MAGGRRGGRAKRRKVCYFTSNGITHIDYKDVDLLRKFISERGKILPRRVTGTSAKYQRKLTVAIKRARQMALLPYVAGE.

The protein belongs to the bacterial ribosomal protein bS18 family. Part of the 30S ribosomal subunit. Forms a tight heterodimer with protein bS6.

Binds as a heterodimer with protein bS6 to the central domain of the 16S rRNA, where it helps stabilize the platform of the 30S subunit. The polypeptide is Small ribosomal subunit protein bS18 (Bacillus licheniformis (strain ATCC 14580 / DSM 13 / JCM 2505 / CCUG 7422 / NBRC 12200 / NCIMB 9375 / NCTC 10341 / NRRL NRS-1264 / Gibson 46)).